A 238-amino-acid chain; its full sequence is MDTAQFHTMLEEKGISLSSQALAQFERYYELLMEWNEKMNLTAITDKPSVYLKHFFDSLSPAFYYDFSQSLSICDVGAGAGFPSVPLKICFPHLKLSIVDSLQKRITFLEHLAAELGLTDVAFYHDRAETFGRKKEFRESFDIVTARAVARMSVLSELCLPLVKVNGTFIAMKAASAQEELEQGKKAIDVLGGEISAIERFMLPIEQSERTIIFIQKVRNTPNKYPRKPGMPNKQPIQ.

S-adenosyl-L-methionine is bound by residues glycine 77, phenylalanine 82, 128–129 (AE), and arginine 147.

The protein belongs to the methyltransferase superfamily. RNA methyltransferase RsmG family.

Its subcellular location is the cytoplasm. Its function is as follows. Specifically methylates the N7 position of guanine in position 535 of 16S rRNA. In Geobacillus sp. (strain WCH70), this protein is Ribosomal RNA small subunit methyltransferase G.